The chain runs to 345 residues: Tryptophan--tRNA ligase (345 aa).

Residues 21 to 23 and 30 to 31 contribute to the ATP site; these read QPT and GN. A 'HIGH' region motif is present at residues 22 to 31; the sequence is PTADSYHLGN. Asp-147 is an L-tryptophan binding site. ATP-binding positions include 159–161, Ile-198, and 207–211; these read GED and KMSKS. Positions 207–211 match the 'KMSKS' region motif; that stretch reads KMSKS.

Belongs to the class-I aminoacyl-tRNA synthetase family. In terms of assembly, homodimer.

The protein localises to the cytoplasm. It catalyses the reaction tRNA(Trp) + L-tryptophan + ATP = L-tryptophyl-tRNA(Trp) + AMP + diphosphate + H(+). Catalyzes the attachment of tryptophan to tRNA(Trp). This is Tryptophan--tRNA ligase from Corynebacterium glutamicum (strain ATCC 13032 / DSM 20300 / JCM 1318 / BCRC 11384 / CCUG 27702 / LMG 3730 / NBRC 12168 / NCIMB 10025 / NRRL B-2784 / 534).